A 1211-amino-acid polypeptide reads, in one-letter code: RNA helicase Mov10l1 (1211 aa).

Disordered stretches follow at residues 340–385 (KENS…GENG) and 674–710 (WNHAQDTKSSGQSTSKKNRKTMTDQAEHGTEERRVGD). Composition is skewed to polar residues over residues 345 to 372 (DENINSLNSHTKNKTSQMSESSLVNNRG) and 674 to 688 (WNHAQDTKSSGQSTS). The span at 694–710 (TMTDQAEHGTEERRVGD) shows a compositional bias: basic and acidic residues. 770–777 (GPPGTGKT) lines the ATP pocket. The DEAG box signature appears at 886–889 (DEAG). The interval 1192-1211 (DPSYPVVPESTGPEKHQEPS) is disordered.

This sequence belongs to the DNA2/NAM7 helicase family. SDE3 subfamily. Interacts with PIWIL1. Interacts with PIWIL2. Interacts with PIWIL4. Interacts with HSPA2. Interacts with PLD6. Specifically expressed in testis.

The protein localises to the cytoplasm. It catalyses the reaction ATP + H2O = ADP + phosphate + H(+). Its function is as follows. ATP-dependent RNA helicase required during spermatogenesis to repress transposable elements and prevent their mobilization, which is essential for germline integrity. Acts via the piRNA metabolic process, which mediates the repression of transposable elements during meiosis by forming complexes composed of piRNAs and Piwi proteins and governs the methylation and subsequent repression of transposons. Involved in the primary piRNA metabolic process. Specifically binds to piRNA precursors and promotes the generation of intermediate piRNA processing fragments that are subsequently loaded to Piwi proteins. Acts via its ATP-dependent RNA helicase activity: displays 5'-3' RNA unwinding activity and probably mediates unwinding and funneling of single-stranded piRNA precursor transcripts to the endonuclease that catalyzes the first cleavage step of piRNA processing to generate piRNA intermediate fragments that are subsequently loaded to Piwi proteins. The protein is RNA helicase Mov10l1 of Homo sapiens (Human).